The primary structure comprises 728 residues: Methionine--tRNA ligase (728 aa).

Residues 13–23 (PYANGSIHLGH) carry the 'HIGH' region motif. Positions 144, 147, 157, and 160 each coordinate Zn(2+). Residues 348–352 (KMSKS) carry the 'KMSKS' region motif. An ATP-binding site is contributed by lysine 351. The tract at residues 585–620 (LAPAKSQQVAQAVETMEKNSSTTPAPAKEGEAGQAS) is disordered. Residues 628–728 (DFGKIDLRVA…EGARPGMKVK (101 aa)) enclose the tRNA-binding domain.

Belongs to the class-I aminoacyl-tRNA synthetase family. MetG type 1 subfamily. In terms of assembly, homodimer. It depends on Zn(2+) as a cofactor.

The protein resides in the cytoplasm. The catalysed reaction is tRNA(Met) + L-methionine + ATP = L-methionyl-tRNA(Met) + AMP + diphosphate. Is required not only for elongation of protein synthesis but also for the initiation of all mRNA translation through initiator tRNA(fMet) aminoacylation. This chain is Methionine--tRNA ligase, found in Nitrosospira multiformis (strain ATCC 25196 / NCIMB 11849 / C 71).